Consider the following 366-residue polypeptide: NADH-quinone oxidoreductase subunit D (366 aa).

This sequence belongs to the complex I 49 kDa subunit family. NDH-1 is composed of 14 different subunits. Subunits NuoB, C, D, E, F, and G constitute the peripheral sector of the complex.

The protein resides in the cell membrane. The catalysed reaction is a quinone + NADH + 5 H(+)(in) = a quinol + NAD(+) + 4 H(+)(out). NDH-1 shuttles electrons from NADH, via FMN and iron-sulfur (Fe-S) centers, to quinones in the respiratory chain. The immediate electron acceptor for the enzyme in this species is believed to be a menaquinone. Couples the redox reaction to proton translocation (for every two electrons transferred, four hydrogen ions are translocated across the cytoplasmic membrane), and thus conserves the redox energy in a proton gradient. This Bacillus cereus (strain ZK / E33L) protein is NADH-quinone oxidoreductase subunit D.